A 142-amino-acid polypeptide reads, in one-letter code: Large-conductance mechanosensitive channel (142 aa).

3 consecutive transmembrane segments (helical) span residues 19–39, 41–61, and 78–98; these read VGIIIGAAFTAIVSSLVADLV, PFIALFTGGIDFSGWFYALDG, and FAFGNFIMAVINFLIIAFVVF.

The protein belongs to the MscL family. In terms of assembly, homopentamer.

It localises to the cell inner membrane. Functionally, channel that opens in response to stretch forces in the membrane lipid bilayer. May participate in the regulation of osmotic pressure changes within the cell. The chain is Large-conductance mechanosensitive channel from Roseobacter denitrificans (strain ATCC 33942 / OCh 114) (Erythrobacter sp. (strain OCh 114)).